The sequence spans 787 residues: Exocyst complex component SEC15B (787 aa).

Belongs to the SEC15 family. As to quaternary structure, the exocyst complex is composed of SEC3, SEC5, SEC6, SEC8, SEC10, EXO70A1 and EXO84B. Interacts with EXO84B. Binds to EXO70H1 AND EXO70B2. Binds directly to B1L.

The protein resides in the cytoplasm. The protein localises to the cytosol. It localises to the cytoskeleton. It is found in the phragmoplast. Its subcellular location is the secreted. The protein resides in the cell wall. The protein localises to the extracellular exosome. Functionally, component of the exocyst complex involved in the docking of exocytic vesicles with fusion sites on the plasma membrane during regulated or polarized secretion. Involved in polarized cell growth and organ morphogenesis. During cytokinesis, involved in cell plate initiation, cell plate maturation and formation of new primary cell wall. The sequence is that of Exocyst complex component SEC15B from Arabidopsis thaliana (Mouse-ear cress).